Consider the following 274-residue polypeptide: Formamidopyrimidine-DNA glycosylase (274 aa).

Proline 2 serves as the catalytic Schiff-base intermediate with DNA. The active-site Proton donor is glutamate 3. Residue lysine 56 is the Proton donor; for beta-elimination activity of the active site. DNA is bound by residues histidine 89, arginine 107, and lysine 148. The FPG-type zinc-finger motif lies at 233–267 (LAYGRAREMCVNCETTLENLKLGQRASVFCPQCQP). Residue arginine 257 is the Proton donor; for delta-elimination activity of the active site.

Belongs to the FPG family. In terms of assembly, monomer. It depends on Zn(2+) as a cofactor.

The catalysed reaction is Hydrolysis of DNA containing ring-opened 7-methylguanine residues, releasing 2,6-diamino-4-hydroxy-5-(N-methyl)formamidopyrimidine.. The enzyme catalyses 2'-deoxyribonucleotide-(2'-deoxyribose 5'-phosphate)-2'-deoxyribonucleotide-DNA = a 3'-end 2'-deoxyribonucleotide-(2,3-dehydro-2,3-deoxyribose 5'-phosphate)-DNA + a 5'-end 5'-phospho-2'-deoxyribonucleoside-DNA + H(+). In terms of biological role, involved in base excision repair of DNA damaged by oxidation or by mutagenic agents. Acts as a DNA glycosylase that recognizes and removes damaged bases. Has a preference for oxidized purines, such as 7,8-dihydro-8-oxoguanine (8-oxoG). Has AP (apurinic/apyrimidinic) lyase activity and introduces nicks in the DNA strand. Cleaves the DNA backbone by beta-delta elimination to generate a single-strand break at the site of the removed base with both 3'- and 5'-phosphates. The protein is Formamidopyrimidine-DNA glycosylase of Acinetobacter baumannii (strain SDF).